A 511-amino-acid chain; its full sequence is Maturase K (511 aa).

The protein belongs to the intron maturase 2 family. MatK subfamily.

Its subcellular location is the plastid. The protein localises to the chloroplast. Its function is as follows. Usually encoded in the trnK tRNA gene intron. Probably assists in splicing its own and other chloroplast group II introns. The polypeptide is Maturase K (Triticum aestivum (Wheat)).